A 385-amino-acid chain; its full sequence is Flap endonuclease 1 (385 aa).

The interval Met-1–Arg-105 is N-domain. Asp-34 contributes to the Mg(2+) binding site. DNA contacts are provided by Arg-47 and Arg-71. Mg(2+) contacts are provided by Asp-87, Glu-156, Glu-158, Asp-177, and Asp-179. The segment at Glu-120–His-251 is I-domain. Glu-156 lines the DNA pocket. Gly-229 and Asp-231 together coordinate DNA. Mg(2+) is bound at residue Asp-231. Residues Val-338–Phe-346 form an interaction with PCNA region. Residues Leu-356–Lys-370 show a composition bias toward low complexity. Residues Leu-356–Lys-385 are disordered. Basic residues predominate over residues Lys-376 to Lys-385.

Belongs to the XPG/RAD2 endonuclease family. FEN1 subfamily. As to quaternary structure, interacts with PCNA. Three molecules of FEN1 bind to one PCNA trimer with each molecule binding to one PCNA monomer. PCNA stimulates the nuclease activity without altering cleavage specificity. Requires Mg(2+) as cofactor. Post-translationally, phosphorylated. Phosphorylation upon DNA damage induces relocalization to the nuclear plasma.

Its subcellular location is the nucleus. It is found in the nucleolus. It localises to the nucleoplasm. The protein resides in the mitochondrion. Structure-specific nuclease with 5'-flap endonuclease and 5'-3' exonuclease activities involved in DNA replication and repair. During DNA replication, cleaves the 5'-overhanging flap structure that is generated by displacement synthesis when DNA polymerase encounters the 5'-end of a downstream Okazaki fragment. It enters the flap from the 5'-end and then tracks to cleave the flap base, leaving a nick for ligation. Also involved in the long patch base excision repair (LP-BER) pathway, by cleaving within the apurinic/apyrimidinic (AP) site-terminated flap. Acts as a genome stabilization factor that prevents flaps from equilibrating into structures that lead to duplications and deletions. Also possesses 5'-3' exonuclease activity on nicked or gapped double-stranded DNA, and exhibits RNase H activity. Also involved in replication and repair of rDNA and in repairing mitochondrial DNA. The protein is Flap endonuclease 1 of Lachancea thermotolerans (strain ATCC 56472 / CBS 6340 / NRRL Y-8284) (Yeast).